Reading from the N-terminus, the 538-residue chain is Putative cysteine ligase BshC (538 aa).

Residues 248–268 (ISKYKEVQEGLRNQQEVIKEL) are a coiled coil.

This sequence belongs to the BshC family.

In terms of biological role, involved in bacillithiol (BSH) biosynthesis. May catalyze the last step of the pathway, the addition of cysteine to glucosamine malate (GlcN-Mal) to generate BSH. This is Putative cysteine ligase BshC from Bacillus cereus (strain B4264).